Reading from the N-terminus, the 391-residue chain is NAD(P)H-quinone oxidoreductase subunit H, chloroplastic (391 aa).

It belongs to the complex I 49 kDa subunit family. As to quaternary structure, NDH is composed of at least 16 different subunits, 5 of which are encoded in the nucleus.

The protein resides in the plastid. It localises to the chloroplast thylakoid membrane. The catalysed reaction is a plastoquinone + NADH + (n+1) H(+)(in) = a plastoquinol + NAD(+) + n H(+)(out). It catalyses the reaction a plastoquinone + NADPH + (n+1) H(+)(in) = a plastoquinol + NADP(+) + n H(+)(out). Its function is as follows. NDH shuttles electrons from NAD(P)H:plastoquinone, via FMN and iron-sulfur (Fe-S) centers, to quinones in the photosynthetic chain and possibly in a chloroplast respiratory chain. The immediate electron acceptor for the enzyme in this species is believed to be plastoquinone. Couples the redox reaction to proton translocation, and thus conserves the redox energy in a proton gradient. This is NAD(P)H-quinone oxidoreductase subunit H, chloroplastic from Chaetosphaeridium globosum (Charophycean green alga).